Reading from the N-terminus, the 215-residue chain is MGKVYDWFEERLEIQSIADDISSKYVPPHVNIFYCIGGITFTCFLVQVATGFAMTFYYRPTVAEAFASVQYIMTEVNFGWLIRSIHRWSASMMVLMMILHVCRVYLTGGFKKPRELTWVTGVIMAVCTVSFGVTGYSLPWDQIGYWAVKIVTGVPDAIPVVGPALVELLRGGVGVGQSTLTRFYSLHTFVLPLATAVFMLMHFLMIRKQGISGPL.

A helical transmembrane segment spans residues 32–52; the sequence is IFYCIGGITFTCFLVQVATGF. Position 35 (cysteine 35) interacts with heme c. Histidine 86 and histidine 100 together coordinate heme b. Helical transmembrane passes span 90-110, 116-136, and 186-206; these read ASMMVLMMILHVCRVYLTGGF, LTWVTGVIMAVCTVSFGVTGY, and LHTFVLPLATAVFMLMHFLMI. Residues histidine 187 and histidine 202 each contribute to the heme b site.

It belongs to the cytochrome b family. PetB subfamily. As to quaternary structure, the 4 large subunits of the cytochrome b6-f complex are cytochrome b6, subunit IV (17 kDa polypeptide, PetD), cytochrome f and the Rieske protein, while the 4 small subunits are PetG, PetL, PetM and PetN. The complex functions as a dimer. The cofactor is heme b. Requires heme c as cofactor.

It localises to the plastid. The protein resides in the chloroplast thylakoid membrane. In terms of biological role, component of the cytochrome b6-f complex, which mediates electron transfer between photosystem II (PSII) and photosystem I (PSI), cyclic electron flow around PSI, and state transitions. The protein is Cytochrome b6 of Chlorella vulgaris (Green alga).